Consider the following 389-residue polypeptide: Protein DDI1 homolog 1 (389 aa).

Residues 109–132 (SSSSAQSAQRTRRVEQDDEGEKSM) are disordered. The active site involves D261.

The protein belongs to the DDI1 family. In terms of tissue distribution, expressed in most tissues.

It localises to the cytoplasm. It is found in the nucleus. Aspartic protease. Required for the cleavage and activation of transcription factors such as isoform a of the transcription factor skn-1, which in turn regulates the expression of proteasomal subunits such as rpt-3. Plays a key role in the degradation of the potassium channel slo-1, perhaps acting directly, in cleaving slo-1 upstream of the ER-associated degradation pathway (ERAD), and also indirectly, via activation of the transcription factor skn-1, which mediates proteasomal homeostasis. The protein is Protein DDI1 homolog 1 of Caenorhabditis elegans.